We begin with the raw amino-acid sequence, 827 residues long: Sporozoite surface protein 2 (827 aa).

Positions 1-22 (MKLLGNSKYIFVVLLLCISVFL) are cleaved as a signal peptide. A VWFA domain is found at 43-228 (DIHILLDGSG…NMIKPFLTKV (186 aa)). The region spanning 235–281 (IAHCGKWEEWSECSTTCDEGRKIRRRQILHPGCVSEMTTPCKVRDCP) is the TSP type-1 domain. Cystine bridges form between Cys-238-Cys-267, Cys-247-Cys-275, and Cys-251-Cys-280. A disordered region spans residues 278-761 (RDCPQIPIPP…NKNQSKSNNG (484 aa)). Low complexity predominate over residues 301–388 (EEPVNPNDPN…NNPNDPSNPN (88 aa)). Residues 306 to 392 (PNDPNDPNNP…DPSNPNNPNP (87 aa)) are 29 X 3 AA tandem repeats. Residues 392–407 (PKKRNPKRRNPNKPKP) show a composition bias toward basic residues. Residues 402 to 514 (PNKPKPNKPN…EPSNPNEPSN (113 aa)) are 20 tandem tetra-/hexapeptide repeats. A compositionally biased stretch (pro residues) spans 408 to 464 (NKPNPNKPNPNEPSNPNKPNPNEPSNPNKPNPNEPSNPNKPNPNEPSNPNKPNPNEP). The span at 465 to 567 (LNPNEPSNPN…KEPSNPNEPS (103 aa)) shows a compositional bias: low complexity. 2 repeat units span residues 603-613 (PEESNPKEPIN) and 614-624 (PEESNPKEPIN). Residues 603 to 624 (PEESNPKEPINPEESNPKEPIN) form a 2 X 11 AA tandem repeats region. The segment covering 657–671 (KGNNIPSNLPENPSD) has biased composition (polar residues). Basic and acidic residues predominate over residues 709–724 (YKGHEERIPKPHRSND). The helical transmembrane segment at 764–787 (IAGGIIGGLAILGCAGVGYNFIAG) threads the bilayer.

The protein resides in the cell membrane. This Plasmodium yoelii yoelii protein is Sporozoite surface protein 2 (SSP2).